Here is a 272-residue protein sequence, read N- to C-terminus: Protein FAM210A (272 aa).

The region spanning 117 to 229 (DKSISLYQRF…GYMSTPPPVK (113 aa)) is the DUF1279 domain. A helical membrane pass occupies residues 136–156 (VLIPVHLITSGVWFGTFYYAA). A coiled-coil region spans residues 229–271 (KEYLQDRMEETKELITEKMEETKDRLTEKLQETKEKVSFKKKV). The tract at residues 246–272 (KMEETKDRLTEKLQETKEKVSFKKKVE) is disordered.

This sequence belongs to the FAM210 family. In terms of assembly, interacts with ATAD3A.

The protein resides in the membrane. It localises to the mitochondrion. The protein localises to the cytoplasm. May play a role in the structure and strength of both muscle and bone. In Pongo abelii (Sumatran orangutan), this protein is Protein FAM210A (FAM210A).